A 495-amino-acid chain; its full sequence is Major facilitator-type transporter hxnP (495 aa).

Residues 1–24 (MGATATDIEKVPSAGTPDEPKAGE) form a disordered region. 5 helical membrane-spanning segments follow: residues 36–55 (SFVRKVDFFVLPMLCLMYFF), 84–104 (LLILLFYIPFGLFDLPWNLLI), 123–143 (VWGICALCQCAANNFGGLLAI), 145–165 (IILGVFEAGFFAGSTFYFTLF), and 177–197 (VLQSFAVLASAFSGLISFGLF). Residue N200 is glycosylated (N-linked (GlcNAc...) asparagine). 5 helical membrane passes run 209-229 (WLFIVEGAMTLIIGVIGFWWL), 282-302 (VITFSYPVAYATAMNFFPIIV), 314-334 (LWTVAPNLVGAVVLLVVAKSS), 341-361 (SLHIIFSLTVSLVGMLILASI), and 368-388 (GVSYFACFLLASGAYIPTCLV). N395 is a glycosylation site (N-linked (GlcNAc...) asparagine). The next 2 membrane-spanning stretches (helical) occupy residues 404 to 424 (ANTGFFVGLGNIAGVLSAATF) and 436 to 456 (LVATCACNGVCILATAFMGTW).

This sequence belongs to the major facilitator superfamily.

It is found in the cell membrane. In terms of biological role, major facilitator-type transporter, part of the hnx cluster involved in the purine degradation. The nicotinate hydroxylase hnxS accepts nicotinate as a substrate and catalyzes the first step of nicotinate catabolism. The major facilitator-type transporters hxnP and hxnZ are probably involved in the uptake of nicotinate-derived metabolites, and the oxidoreductases hxnT and hxnY in the further metabolism of 6-OH nicotinic acid. The sequence is that of Major facilitator-type transporter hxnP from Emericella nidulans (strain FGSC A4 / ATCC 38163 / CBS 112.46 / NRRL 194 / M139) (Aspergillus nidulans).